A 531-amino-acid chain; its full sequence is GPI alpha-1,2-mannosyltransferase 3 (531 aa).

Asn-84 carries N-linked (GlcNAc...) asparagine glycosylation. 3 helical membrane-spanning segments follow: residues 99-119 (GLRGFSYPLMFAAIYKVLYLL), 124-144 (VWFLIWIPRLAQAVLSGIADV), and 174-196 (YCATRTLTNTMEAVLSTFALYYY). An N-linked (GlcNAc...) asparagine glycan is attached at Asn-204. Helical transmembrane passes span 210-230 (LICVALAFLIRPTAVILWIPL), 249-269 (YLPIGILTLAASLTVDRIFFG), 303-323 (GVPVILCTHLPFFIHGCMVTP), 328-348 (ILLVAVAWTVLTYSALSHKEF), 350-370 (FIYPVLPVCMVFCGFSFSNLK), and 375-395 (AAVGFLVLSNLFPALYTGLIH). Asn-414 and Asn-476 each carry an N-linked (GlcNAc...) asparagine glycan.

The protein belongs to the glycosyltransferase 22 family. PIGB subfamily.

It is found in the endoplasmic reticulum membrane. The protein operates within glycolipid biosynthesis; glycosylphosphatidylinositol-anchor biosynthesis. Its function is as follows. Alpha-1,2-mannosyltransferase that catalyzes the transfer of the third mannose, via an alpha-1,2 bond, from a dolichol-phosphate-mannose (Dol-P-Man) to an alpha-D-Man-(1-&gt;6)-2-PEtn-alpha-D-Man-(1-&gt;4)-alpha-D-GlcN-(1-&gt;6)-(1-radyl,2-acyl-sn-glycero-3-phospho)-2-acyl-inositol intermediate to generate an alpha-D-Man-(1-&gt;2)-alpha-D-Man-(1-&gt;6)-2-PEtn-alpha-D-Man-(1-&gt;4)-alpha-D-GlcN-(1-&gt;6)-(1-radyl,2-acyl-sn-glycero-3-phospho)-2-acyl-inositol (also termed H6) and participates in the nineth step of the glycosylphosphatidylinositol-anchor biosynthesis. May also add the third mannose to an alpha-D-Man-(1-&gt;6)-alpha-D-Man-(1-&gt;4)-alpha-D-GlcN-(1-&gt;6)-(1-radyl,2-acyl-sn-glycero-3-phospho)-2-acyl-inositol (also termed H3) intermediate generating an alpha-D-Man-(1-&gt;2)-alpha-D-Man-(1-&gt;6)-alpha-D-Man-(1-&gt;4)-alpha-D-GlcN-(1-&gt;6)-(1-radyl,2-acyl-sn-glycero-3-phospho)-2-acyl-inositol (also termed H4). This chain is GPI alpha-1,2-mannosyltransferase 3, found in Xenopus laevis (African clawed frog).